The sequence spans 266 residues: Interleukin-33 (266 aa).

The tract at residues 1-67 (MRPRMKYSNS…ETSYFRKEPT (67 aa)) is homeodomain-like HTH domain. The propeptide occupies 1–101 (MRPRMKYSNS…RSLLGSIQAF (101 aa)). The segment at 66–108 (PTKRYSLKSGTKHEENFSAYPRDSRKRSLLGSIQAFAASVDTL) is interaction with RELA.

Belongs to the IL-1 family. Highly divergent. In terms of assembly, (Microbial infection) Interacts (in reduced form) with H.polygyrus ARI; the interaction abolishes the interaction with its primary receptor IL1RL1. Forms a 1:1:1 heterotrimeric complex with its primary high-affinity receptor IL1RL1 and the coreceptor IL1RAP. Interacts with cargo receptor TMED10; the interaction mediates the translocation from the cytoplasm into the ERGIC (endoplasmic reticulum-Golgi intermediate compartment) and thereby secretion. In terms of processing, the full-length protein can be released from cells and is able to signal via the IL1RL1/ST2 receptor. However, proteolytic processing by CELA1, CSTG/cathepsin G and ELANE/neutrophil elastase produces C-terminal peptides that are more active than the unprocessed full-length protein. May also be proteolytically processed by calpains. Proteolytic cleavage mediated by apoptotic caspases including CASP3 and CASP7 results in IL33 inactivation. In vitro proteolytic cleavage by CASP1 was reported but could not be confirmed in vivo suggesting that IL33 is probably not a direct substrate for that caspase.

It localises to the nucleus. It is found in the chromosome. The protein resides in the cytoplasm. Its subcellular location is the cytoplasmic vesicle. The protein localises to the secretory vesicle. It localises to the secreted. Cytokine that binds to and signals through the IL1RL1/ST2 receptor which in turn activates NF-kappa-B and MAPK signaling pathways in target cells. Involved in the maturation of Th2 cells inducing the secretion of T-helper type 2-associated cytokines. Also involved in activation of mast cells, basophils, eosinophils and natural killer cells. Acts as an enhancer of polarization of alternatively activated macrophages. Acts as a chemoattractant for Th2 cells, and may function as an 'alarmin', that amplifies immune responses during tissue injury. Induces rapid UCP2-dependent mitochondrial rewiring that attenuates the generation of reactive oxygen species and preserves the integrity of Krebs cycle required for persistent production of itaconate and subsequent GATA3-dependent differentiation of inflammation-resolving alternatively activated macrophages. Its function is as follows. In quiescent endothelia the uncleaved form is constitutively and abundantly expressed, and acts as a chromatin-associated nuclear factor with transcriptional repressor properties, it may sequester nuclear NF-kappaB/RELA, lowering expression of its targets. This form is rapidely lost upon angiogenic or pro-inflammatory activation. This chain is Interleukin-33, found in Mus musculus (Mouse).